The following is a 365-amino-acid chain: Transmembrane protein 25 (365 aa).

The signal sequence occupies residues 1–26 (MELPLSQATLRHTLLLLPALLSSGQG). The Extracellular portion of the chain corresponds to 27-232 (ELAPQIDGQT…APGLLATRIE (206 aa)). Residues 30-123 (PQIDGQTWAE…SGRPANASVI (94 aa)) form the Ig-like domain. Cysteine 52 and cysteine 107 are joined by a disulfide. Asparagine 106, asparagine 162, asparagine 192, and asparagine 205 each carry an N-linked (GlcNAc...) asparagine glycan. A helical membrane pass occupies residues 233-253 (VPLLGIVVAGGLALGTLVGFS). The Cytoplasmic segment spans residues 254–365 (TLVACLVCRK…SSVSSDEIWL (112 aa)).

Interacts with GRIN2B. In terms of tissue distribution, expressed throughout the brain with higher levels within the hippocampus.

It is found in the late endosome. Its subcellular location is the lysosome. It localises to the cell membrane. The protein resides in the secreted. Its function is as follows. In neurons, modulates the degradation of NMDA receptor GRIN2B subunit. Plays a role in the regulation of neuronal excitability. This chain is Transmembrane protein 25, found in Mus musculus (Mouse).